The chain runs to 237 residues: MEKREELYAGKAKSVYRTDDPERFVLVFRDDTSAFDGEKKEQLNRKGMVNNKFNAFIMEKLEAAGVPTHFEGLLSDTESLVKKLEMIPVECVVRNVSAGSLCRRLGVEEGLELNPPTFELFLKNDALHDPMVNESLAVSFGWAKADELARMKELTYKVNDVLKKLFDDAGMLLVDYKLEFGRSGGQIVLGDEFSPDGCRIWDKETRKKMDKDRFRQGLGEVIETYEEVGRRLGIKFD.

This sequence belongs to the SAICAR synthetase family.

The enzyme catalyses 5-amino-1-(5-phospho-D-ribosyl)imidazole-4-carboxylate + L-aspartate + ATP = (2S)-2-[5-amino-1-(5-phospho-beta-D-ribosyl)imidazole-4-carboxamido]succinate + ADP + phosphate + 2 H(+). The protein operates within purine metabolism; IMP biosynthesis via de novo pathway; 5-amino-1-(5-phospho-D-ribosyl)imidazole-4-carboxamide from 5-amino-1-(5-phospho-D-ribosyl)imidazole-4-carboxylate: step 1/2. This chain is Phosphoribosylaminoimidazole-succinocarboxamide synthase, found in Marinobacter nauticus (strain ATCC 700491 / DSM 11845 / VT8) (Marinobacter aquaeolei).